A 264-amino-acid chain; its full sequence is Undecaprenyl-diphosphatase (264 aa).

8 helical membrane passes run 7–27, 39–59, 89–109, 112–132, 145–165, 182–202, 212–232, and 244–264; these read VVIL…SSGH, LPIV…MIYY, ILLI…IEMF, LFTL…LFLL, ILLA…PGIS, SESF…SLLL, MLFS…VGLF, and SKLY…YFLF.

The protein belongs to the UppP family.

The protein localises to the cell inner membrane. It carries out the reaction di-trans,octa-cis-undecaprenyl diphosphate + H2O = di-trans,octa-cis-undecaprenyl phosphate + phosphate + H(+). Functionally, catalyzes the dephosphorylation of undecaprenyl diphosphate (UPP). Confers resistance to bacitracin. The polypeptide is Undecaprenyl-diphosphatase (Borrelia hermsii (strain HS1 / DAH)).